Here is a 394-residue protein sequence, read N- to C-terminus: MGLLQEKLAKYDLPQKFMAQGVYPYFREIEGKQGTEVEMGGHEVLMFGSNAYTGLTGDERVIEAGIKAMHKYGSGCAGSRFLNGTLDLHVQLEKELAAFVGKDEALCFSTGFTVNSGVIPALTDRNDYIICDDRDHASIVDGRRLSFSQQLKYKHNDMADLEKQLQKCNPDSVKLIIVDGVFSMEGDLANLPEIVRLKHKYNATIMVDEAHGLGVFGKQGRGVCDHFGLTHEVDLIMGTFSKSLASIGGFIAADSSIINWLRHNARTYIFSASNTPAATASALEALHIIQDEPERLEALWEATNYALKRFREAGFEIGATESPIIPLYVRDTEKTFMVTKLAFDEGVFINPVIPPACAPQDTLVRVALMATHTKDQIDRAVEKLVKAFKALDLL.

Residues 111–112 (GF), Ser-183, His-211, and Thr-239 each bind pyridoxal 5'-phosphate. Position 242 is an N6-(pyridoxal phosphate)lysine (Lys-242).

This sequence belongs to the class-II pyridoxal-phosphate-dependent aminotransferase family. The cofactor is pyridoxal 5'-phosphate.

The catalysed reaction is L-serine + hexadecanoyl-CoA + H(+) = 3-oxosphinganine + CO2 + CoA. It functions in the pathway lipid metabolism; sphingolipid metabolism. Involved in de novo bacterial ceramide synthesis. Catalyzes the condensation of L-serine with palmitoyl-CoA (hexadecanoyl-CoA) to produce 3-oxosphinganine. Also capable of using alanine as substrate leading to the formation of 1-deoxysphinganine (1-deoxySa). Contributes to the levels of endogenous sphingolipids in its host. This is Serine palmitoyltransferase from Bacteroides ovatus (strain ATCC 8483 / DSM 1896 / JCM 5824 / BCRC 10623 / CCUG 4943 / NCTC 11153).